A 322-amino-acid polypeptide reads, in one-letter code: Lipoyl synthase (322 aa).

The [4Fe-4S] cluster site is built by cysteine 68, cysteine 73, cysteine 79, cysteine 94, cysteine 98, cysteine 101, and serine 309. The 219-residue stretch at 80–298 folds into the Radical SAM core domain; sequence FNHGTASFMI…RVAGVEMGFS (219 aa).

It belongs to the radical SAM superfamily. Lipoyl synthase family. The cofactor is [4Fe-4S] cluster.

The protein localises to the cytoplasm. The enzyme catalyses [[Fe-S] cluster scaffold protein carrying a second [4Fe-4S](2+) cluster] + N(6)-octanoyl-L-lysyl-[protein] + 2 oxidized [2Fe-2S]-[ferredoxin] + 2 S-adenosyl-L-methionine + 4 H(+) = [[Fe-S] cluster scaffold protein] + N(6)-[(R)-dihydrolipoyl]-L-lysyl-[protein] + 4 Fe(3+) + 2 hydrogen sulfide + 2 5'-deoxyadenosine + 2 L-methionine + 2 reduced [2Fe-2S]-[ferredoxin]. The protein operates within protein modification; protein lipoylation via endogenous pathway; protein N(6)-(lipoyl)lysine from octanoyl-[acyl-carrier-protein]: step 2/2. Catalyzes the radical-mediated insertion of two sulfur atoms into the C-6 and C-8 positions of the octanoyl moiety bound to the lipoyl domains of lipoate-dependent enzymes, thereby converting the octanoylated domains into lipoylated derivatives. The sequence is that of Lipoyl synthase from Idiomarina loihiensis (strain ATCC BAA-735 / DSM 15497 / L2-TR).